The primary structure comprises 262 residues: Trypsin theta (262 aa).

The N-terminal stretch at 1-19 (MHRLVVLLVCLAVGSACAG) is a signal peptide. A propeptide spans 20 to 34 (TVGVSNGDPFEREGR) (activation peptide). A Peptidase S1 domain is found at 35-260 (IVGGEDTTIG…LRKWILNASE (226 aa)). The cysteines at positions 61 and 77 are disulfide-linked. Active-site charge relay system residues include His76 and Asp121. 2 disulfide bridges follow: Cys186–Cys203 and Cys212–Cys236. Residue Ser216 is the Charge relay system of the active site.

This sequence belongs to the peptidase S1 family.

The protein resides in the secreted. The protein localises to the extracellular space. It catalyses the reaction Preferential cleavage: Arg-|-Xaa, Lys-|-Xaa.. In Drosophila melanogaster (Fruit fly), this protein is Trypsin theta (thetaTry).